The sequence spans 276 residues: Beta-lactamase OXA-1 (276 aa).

The signal sequence occupies residues 1–25; that stretch reads MKNTIHINFAIFLIIANIIYSSASA. The active-site Acyl-ester intermediate is S71. 5 residues coordinate a beta-lactam: S71, K74, S118, T216, and A218. K74 carries the N6-carboxylysine modification.

This sequence belongs to the class-D beta-lactamase family. In terms of assembly, monomer.

The protein localises to the periplasm. The catalysed reaction is a beta-lactam + H2O = a substituted beta-amino acid. Inhibited by penicillin sulfones. Only weakly inhibited by clavulanic acid and sulbactam. In terms of biological role, class D beta-lactamase which confers resistance to the beta-lactam antibiotics, including amoxicillin and ticarcillin. Acts via hydrolysis of the beta-lactam ring. Has penicillin- and cephalosporin-hydrolyzing activities. This Escherichia coli protein is Beta-lactamase OXA-1.